Reading from the N-terminus, the 146-residue chain is Anti-sigma F factor (146 aa).

The protein belongs to the anti-sigma-factor family.

It catalyses the reaction L-seryl-[protein] + ATP = O-phospho-L-seryl-[protein] + ADP + H(+). It carries out the reaction L-threonyl-[protein] + ATP = O-phospho-L-threonyl-[protein] + ADP + H(+). Its function is as follows. Binds to sigma F and blocks its ability to form an RNA polymerase holoenzyme (E-sigma F). Phosphorylates SpoIIAA on a serine residue. This phosphorylation may enable SpoIIAA to act as an anti-anti-sigma factor that counteracts SpoIIAB and thus releases sigma F from inhibition. This is Anti-sigma F factor from Geobacillus kaustophilus (strain HTA426).